The sequence spans 199 residues: Auxin-responsive protein IAA1 (199 aa).

The EAR-like (transcriptional repression) signature appears at 25–29 (LTLRL). Residues 31–74 (GSLAAAAAPDPDRKRSSPSSSDAADAADNSSPLAAAADAPPAPK) form a disordered region. Residues 47 to 69 (SPSSSDAADAADNSSPLAAAADA) are compositionally biased toward low complexity. The PB1 domain maps to 93-187 (AKFVKVAVDG…TCQRLRLMKS (95 aa)).

Belongs to the Aux/IAA family. Homodimers and heterodimers. As to expression, highly expressed in flowers. Expressed at low levels in roots and shoots.

It is found in the nucleus. Functionally, aux/IAA proteins are short-lived transcriptional factors that function as repressors of early auxin response genes at low auxin concentrations. The protein is Auxin-responsive protein IAA1 (IAA1) of Oryza sativa subsp. japonica (Rice).